The sequence spans 591 residues: Aspartate--tRNA(Asp/Asn) ligase (591 aa).

Glu170 contacts L-aspartate. The aspartate stretch occupies residues 194–197; it reads QLFK. Residue Arg216 participates in L-aspartate binding. ATP-binding positions include 216 to 218 and Gln225; that span reads RDE. Residue His448 coordinates L-aspartate. Residue Glu482 coordinates ATP. An L-aspartate-binding site is contributed by Arg489. Residue 534–537 coordinates ATP; that stretch reads GWDR. Residues 559 to 591 are disordered; the sequence is GGVDPLTDAPAPITEQQRKESGIDVKPEPSKPH. Residues 574-591 are compositionally biased toward basic and acidic residues; it reads QQRKESGIDVKPEPSKPH.

It belongs to the class-II aminoacyl-tRNA synthetase family. Type 1 subfamily. Homodimer.

It is found in the cytoplasm. The catalysed reaction is tRNA(Asx) + L-aspartate + ATP = L-aspartyl-tRNA(Asx) + AMP + diphosphate. Aspartyl-tRNA synthetase with relaxed tRNA specificity since it is able to aspartylate not only its cognate tRNA(Asp) but also tRNA(Asn). Reaction proceeds in two steps: L-aspartate is first activated by ATP to form Asp-AMP and then transferred to the acceptor end of tRNA(Asp/Asn). In Mycolicibacterium paratuberculosis (strain ATCC BAA-968 / K-10) (Mycobacterium paratuberculosis), this protein is Aspartate--tRNA(Asp/Asn) ligase.